A 574-amino-acid polypeptide reads, in one-letter code: Pentatricopeptide repeat-containing protein At5g25630 (574 aa).

The span at 1–21 (MEDVNQEKKKVPPMSEPERST) shows a compositional bias: basic and acidic residues. Positions 1–25 (MEDVNQEKKKVPPMSEPERSTPIKT) are disordered. PPR repeat units lie at residues 44–78 (TVRS…GHRP), 79–113 (SLIS…GTKL), 114–148 (DSIF…GLNP), 149–183 (TTST…GNVD), 187–221 (NIRT…GVRP), 222–258 (DTVT…KAKP), 259–293 (NGRT…RVEA), 294–328 (NLVV…NVKA), 329–363 (DVIT…GVKP), 364–394 (DAHA…LIVE), 398–432 (NVVI…GVSP), and 433–467 (NIKT…GVKP).

The protein belongs to the PPR family. P subfamily.

This chain is Pentatricopeptide repeat-containing protein At5g25630, found in Arabidopsis thaliana (Mouse-ear cress).